Consider the following 186-residue polypeptide: Ribosome-recycling factor (186 aa).

It belongs to the RRF family.

The protein localises to the cytoplasm. Functionally, responsible for the release of ribosomes from messenger RNA at the termination of protein biosynthesis. May increase the efficiency of translation by recycling ribosomes from one round of translation to another. This is Ribosome-recycling factor from Bordetella avium (strain 197N).